A 171-amino-acid chain; its full sequence is Putative defense protein (171 aa).

The N-terminal stretch at methionine 1–alanine 23 is a signal peptide. Positions arginine 24–serine 171 constitute a Reelin domain. A disulfide bond links cysteine 33 and cysteine 110. N-linked (GlcNAc...) asparagine glycosylation is present at asparagine 41.

This sequence belongs to the insect defense protein family.

Its subcellular location is the secreted. In terms of biological role, may have antimicrobial activity. In Bombyx mori (Silk moth), this protein is Putative defense protein.